Reading from the N-terminus, the 244-residue chain is Ureidoacrylate amidohydrolase RutB (244 aa).

Catalysis depends on Asp38, which acts as the Proton acceptor. Residue Lys147 is part of the active site. Cys180 serves as the catalytic Nucleophile.

It belongs to the isochorismatase family. RutB subfamily.

It catalyses the reaction (Z)-3-ureidoacrylate + H2O + H(+) = (Z)-3-aminoacrylate + NH4(+) + CO2. It carries out the reaction (Z)-3-ureidoacrylate + H2O = (Z)-3-aminoacrylate + carbamate + H(+). The catalysed reaction is (Z)-2-methylureidoacrylate + H2O + H(+) = (Z)-2-methylaminoacrylate + NH4(+) + CO2. Functionally, hydrolyzes ureidoacrylate to form aminoacrylate and carbamate. The carbamate hydrolyzes spontaneously, thereby releasing one of the nitrogen atoms of the pyrimidine ring as ammonia and one of its carbon atoms as CO2. The chain is Ureidoacrylate amidohydrolase RutB from Shigella flexneri serotype X (strain 2002017).